A 240-amino-acid polypeptide reads, in one-letter code: LexA repressor (240 aa).

Residues 26-46 (FDEMKEALDLASKSGIHRLIT) constitute a DNA-binding region (H-T-H motif). Catalysis depends on for autocatalytic cleavage activity residues S161 and K199.

Belongs to the peptidase S24 family. Homodimer.

It carries out the reaction Hydrolysis of Ala-|-Gly bond in repressor LexA.. In terms of biological role, represses a number of genes involved in the response to DNA damage (SOS response), including recA and lexA. In the presence of single-stranded DNA, RecA interacts with LexA causing an autocatalytic cleavage which disrupts the DNA-binding part of LexA, leading to derepression of the SOS regulon and eventually DNA repair. This Brucella ovis (strain ATCC 25840 / 63/290 / NCTC 10512) protein is LexA repressor.